Consider the following 350-residue polypeptide: Biotin synthase (350 aa).

Residues 38 to 256 (NYVQVSTLLS…IAIARIMMPQ (219 aa)) form the Radical SAM core domain. Positions 53, 57, and 60 each coordinate [4Fe-4S] cluster. [2Fe-2S] cluster is bound by residues cysteine 97, cysteine 128, cysteine 188, and arginine 260.

It belongs to the radical SAM superfamily. Biotin synthase family. In terms of assembly, homodimer. Requires [4Fe-4S] cluster as cofactor. The cofactor is [2Fe-2S] cluster.

The enzyme catalyses (4R,5S)-dethiobiotin + (sulfur carrier)-SH + 2 reduced [2Fe-2S]-[ferredoxin] + 2 S-adenosyl-L-methionine = (sulfur carrier)-H + biotin + 2 5'-deoxyadenosine + 2 L-methionine + 2 oxidized [2Fe-2S]-[ferredoxin]. It participates in cofactor biosynthesis; biotin biosynthesis; biotin from 7,8-diaminononanoate: step 2/2. Catalyzes the conversion of dethiobiotin (DTB) to biotin by the insertion of a sulfur atom into dethiobiotin via a radical-based mechanism. The protein is Biotin synthase of Vibrio campbellii (strain ATCC BAA-1116).